A 212-amino-acid polypeptide reads, in one-letter code: Ribosomal RNA large subunit methyltransferase E (212 aa).

Residues Gly-57, Trp-59, Asp-77, Asp-93, and Asp-122 each contribute to the S-adenosyl-L-methionine site. The Proton acceptor role is filled by Lys-162.

Belongs to the class I-like SAM-binding methyltransferase superfamily. RNA methyltransferase RlmE family.

It is found in the cytoplasm. It carries out the reaction uridine(2552) in 23S rRNA + S-adenosyl-L-methionine = 2'-O-methyluridine(2552) in 23S rRNA + S-adenosyl-L-homocysteine + H(+). Functionally, specifically methylates the uridine in position 2552 of 23S rRNA at the 2'-O position of the ribose in the fully assembled 50S ribosomal subunit. The protein is Ribosomal RNA large subunit methyltransferase E of Coxiella burnetii (strain RSA 331 / Henzerling II).